Here is an 89-residue protein sequence, read N- to C-terminus: Small ribosomal subunit protein uS15 (89 aa).

Over residues 1-21 (MVMTAEDKAQVIGEHKKHDGD) the composition is skewed to basic and acidic residues. The tract at residues 1 to 24 (MVMTAEDKAQVIGEHKKHDGDTGS) is disordered.

It belongs to the universal ribosomal protein uS15 family. Part of the 30S ribosomal subunit. Forms a bridge to the 50S subunit in the 70S ribosome, contacting the 23S rRNA.

Its function is as follows. One of the primary rRNA binding proteins, it binds directly to 16S rRNA where it helps nucleate assembly of the platform of the 30S subunit by binding and bridging several RNA helices of the 16S rRNA. Forms an intersubunit bridge (bridge B4) with the 23S rRNA of the 50S subunit in the ribosome. In Solidesulfovibrio magneticus (strain ATCC 700980 / DSM 13731 / RS-1) (Desulfovibrio magneticus), this protein is Small ribosomal subunit protein uS15.